The sequence spans 186 residues: Ribosome-recycling factor (186 aa).

It belongs to the RRF family.

The protein resides in the cytoplasm. Its function is as follows. Responsible for the release of ribosomes from messenger RNA at the termination of protein biosynthesis. May increase the efficiency of translation by recycling ribosomes from one round of translation to another. This Rickettsia bellii (strain OSU 85-389) protein is Ribosome-recycling factor.